We begin with the raw amino-acid sequence, 222 residues long: MADS-box transcription factor 26 (222 aa).

Residues 1 to 61 (MARGKVQLRR…GKLYDLATTG (61 aa)) form the MADS-box domain. The 92-residue stretch at 85–176 (RMDPKQEAMV…QEKIVEQNGL (92 aa)) folds into the K-box domain.

It localises to the nucleus. Probable transcription factor. This is MADS-box transcription factor 26 (MADS26) from Oryza sativa subsp. indica (Rice).